The primary structure comprises 130 residues: Small ribosomal subunit protein uS9 (130 aa).

This sequence belongs to the universal ribosomal protein uS9 family.

The chain is Small ribosomal subunit protein uS9 from Nitrosomonas eutropha (strain DSM 101675 / C91 / Nm57).